The following is a 539-amino-acid chain: Gamma-2-syntrophin (539 aa).

In terms of domain architecture, PDZ spans 73-156 (TVTLRRQPVG…DVTITVEYLR (84 aa)). The PH domain occupies 296-421 (QVVHMGWVNE…WEKAFQRATF (126 aa)).

The protein belongs to the syntrophin family. Interacts with the dystrophin protein DMD and related proteins DTNA and DTNB.

It is found in the cell membrane. Its subcellular location is the sarcolemma. The protein localises to the cytoplasm. It localises to the cytoskeleton. Functionally, adapter protein that binds to and probably organizes the subcellular localization of a variety of proteins. May link various receptors to the actin cytoskeleton and the dystrophin glycoprotein complex. This is Gamma-2-syntrophin (Sntg2) from Mus musculus (Mouse).